A 438-amino-acid chain; its full sequence is Serine hydroxymethyltransferase (438 aa).

Residue 133-135 (GHI) coordinates (6S)-5,6,7,8-tetrahydrofolate. Lysine 239 is modified (N6-(pyridoxal phosphate)lysine).

The protein belongs to the SHMT family. In terms of assembly, homodimer. Requires pyridoxal 5'-phosphate as cofactor.

The protein localises to the cytoplasm. The catalysed reaction is 5,10-methylenetetrahydromethanopterin + glycine + H2O = 5,6,7,8-tetrahydromethanopterin + L-serine. It functions in the pathway amino-acid biosynthesis; glycine biosynthesis; glycine from L-serine: step 1/1. Its function is as follows. Catalyzes the reversible interconversion of serine and glycine with tetrahydromethanopterin (H4MPT) serving as the one-carbon carrier. Also exhibits a pteridine-independent aldolase activity toward beta-hydroxyamino acids, producing glycine and aldehydes, via a retro-aldol mechanism. The sequence is that of Serine hydroxymethyltransferase from Archaeoglobus fulgidus (strain ATCC 49558 / DSM 4304 / JCM 9628 / NBRC 100126 / VC-16).